The primary structure comprises 806 residues: Leucine--tRNA ligase (806 aa).

Residues P38–H48 carry the 'HIGH' region motif. Positions K572–S576 match the 'KMSKS' region motif. Position 575 (K575) interacts with ATP.

The protein belongs to the class-I aminoacyl-tRNA synthetase family.

The protein localises to the cytoplasm. The enzyme catalyses tRNA(Leu) + L-leucine + ATP = L-leucyl-tRNA(Leu) + AMP + diphosphate. This is Leucine--tRNA ligase from Helicobacter pylori (strain J99 / ATCC 700824) (Campylobacter pylori J99).